The primary structure comprises 1130 residues: MDESSELGVLETMETLTELGDELTLGDIDEMLQFVSNQVGEFPDLFSEQLCSSFPGGGSNGGSGNNSSGRGNNGGATDPAVQRSFSQVPLSTFSPSAASPQAPALQVKVSPTPPRATPVLQPRPQPQPQPPAQLQQQTVMITPTFSTAPQTRIIQQPLIYQNAATSFQVLQPQVQSLVTSPQVQPVTIQQQVQTVQAQRVLTQTANGTLQTLAPATVQTVAAPQVQQVPVLVQPQIIKTDSLVLTTLKTDGSPVMAAVQNPALTALTAPIQTAALQVPTLVGSNGTILTTMPVMMGQEKVPIKQVPGGVKQLDPPKEGERRTTHNIIEKRYRSSINDKIIELKDLVMGTDAKMHKSGVLRKAIDYIKYLQQVNHKLRQENMVLKLANQKNKLLKGIDLGSLVDSDVDLKIDDFNQNVLLMSPPASDSGSQAGFSPYSIDSEPGSPLLDDAKVKDEPDSPPVALGMVDRSRILLCVLTFLGLSFNPLTSLLQWGGAHNTDQHPYSGSGRSVLSLESGAGGWFDWMVPTLLLWLVNGVIVLSVFVKLLVHGEPVIRPHSRPSVTFWRHRKQADLDLAKGDFAAAAANLQTCLSVLGRALPTSRLDLACSLSWNVIRYSLQKLRLVRWLLKKVFQRWRATPATAAGFEDEAKSSARDAALAYHRLHQLHITGKLPAGSACSDVHMALCAVNLAECAEEKILPSTLIEIHLTAAMGLKTRCGGKLGFLASYFLNRAQSLCGPEHSTVPDSLRWLCHPLGQKFFMERSWSIKSAAKESLYCAQRSPADPIAQVHQAFCKNLLERAVESLVKPQAKKKAGDQEEESCEFSSALEYLKLLHSFVDSVGFVTSPFSSSSVLRSALGPDVICRWWTSAVTMAISWLQGDDAAVRSRFTEVERVPKALEVTESPLVKAVFYTCRAMHASLSGKADGQQNSFCHCERASGHLWSSLNVSGTTSDPSLNHVIQLFTCDLLLSLRTALWQKQASASQLLGETYHASGTELAGFQRDLGSLRRLAHSFRPAYRKVFLHEATVRLMAGASPTRTHQLLEHSLRRRPTQNTKHGEVDTWPGQRERATAILLACRHLPLSFLSSPGQRAVLLAEAARTLEKVGDRRSCSDCQQMIVKLGGGTAIAAS.

The interval 1 to 50 is transcriptional activation (acidic); the sequence is MDESSELGVLETMETLTELGDELTLGDIDEMLQFVSNQVGEFPDLFSEQL. Residues 1–470 are Cytoplasmic-facing; it reads MDESSELGVL…VALGMVDRSR (470 aa). The tract at residues 53–133 is disordered; it reads SFPGGGSNGG…PQPQPQPPAQ (81 aa). Residues 55–64 show a composition bias toward gly residues; sequence PGGGSNGGSG. A compositionally biased stretch (polar residues) spans 83-93; it reads RSFSQVPLSTF. Low complexity predominate over residues 94 to 104; it reads SPSAASPQAPA. A compositionally biased stretch (pro residues) spans 111-131; the sequence is PTPPRATPVLQPRPQPQPQPP. The interval 226–480 is interaction with LMNA; sequence QQVPVLVQPQ…ILLCVLTFLG (255 aa). Residues 319–369 form the bHLH domain; sequence ERRTTHNIIEKRYRSSINDKIIELKDLVMGTDAKMHKSGVLRKAIDYIKYL. Residues 369-390 are leucine-zipper; the sequence is LQQVNHKLRQENMVLKLANQKN. Residue Lys453 forms a Glycyl lysine isopeptide (Lys-Gly) (interchain with G-Cter in SUMO2) linkage. The chain crosses the membrane as a helical span at residues 471-491; the sequence is ILLCVLTFLGLSFNPLTSLLQ. Residues 492–522 are Lumenal-facing; sequence WGGAHNTDQHPYSGSGRSVLSLESGAGGWFD. Residues 523-543 traverse the membrane as a helical segment; the sequence is WMVPTLLLWLVNGVIVLSVFV. The Cytoplasmic portion of the chain corresponds to 544–1130; it reads KLLVHGEPVI…LGGGTAIAAS (587 aa). Position 1087 is a phosphoserine (Ser1087).

This sequence belongs to the SREBP family. As to quaternary structure, forms a tight complex with SCAP, the SCAP-SREBP complex, in the endoplasmic reticulum membrane and the Golgi apparatus. Interacts with PAQR3; the interaction anchors the SCAP-SREBP complex to the Golgi apparatus in low cholesterol conditions. Interacts (via C-terminal domain) with RNF139. Homodimer; efficient DNA binding of the soluble transcription factor fragment requires dimerization with another bHLH protein. Interacts with LMNA. Processed in the Golgi apparatus, releasing the protein from the membrane. At low cholesterol the SCAP-SREBP complex is recruited into COPII vesicles for export from the endoplasmic reticulum. In the Golgi, complex SREBPs are cleaved sequentially by site-1 (MBTPS1, S1P) and site-2 (MBTPS2, S2P) proteases. The first cleavage by site-1 protease occurs within the luminal loop, the second cleavage by site-2 protease occurs within the first transmembrane domain, releasing the transcription factor from the Golgi membrane. Apoptosis triggers cleavage by the cysteine proteases caspase-3 and caspase-7. Cleavage and activation is induced by mediated cholesterol efflux. Post-translationally, phosphorylated by AMPK, leading to suppress protein processing and nuclear translocation, and repress target gene expression. In terms of processing, SCAP-free SREBF2 is ubiquitinated by the BCR(ARMC5) complex, leading to its degradation. Ubiquitinated; the nuclear form has a rapid turnover and is rapidly ubiquitinated and degraded by the proteasome in the nucleus.

The protein localises to the endoplasmic reticulum membrane. The protein resides in the golgi apparatus membrane. It is found in the cytoplasmic vesicle. It localises to the COPII-coated vesicle membrane. Its subcellular location is the nucleus. Its activity is regulated as follows. Activation by cleavage is down-regulated upon activation of SIRT3-dependent PRKAA1/AMPK-alpha signaling cascade which leads to inhibition of ATP-consuming lipogenesis to restore cellular energy balance. In terms of biological role, precursor of the transcription factor form (Processed sterol regulatory element-binding protein 2), which is embedded in the endoplasmic reticulum membrane. Low sterol concentrations promote processing of this form, releasing the transcription factor form that translocates into the nucleus and activates transcription of genes involved in cholesterol biosynthesis. Its function is as follows. Key transcription factor that regulates expression of genes involved in cholesterol biosynthesis. Binds to the sterol regulatory element 1 (SRE-1) (5'-ATCACCCCAC-3'). Has dual sequence specificity binding to both an E-box motif (5'-ATCACGTGA-3') and to SRE-1 (5'-ATCACCCCAC-3'). Regulates transcription of genes related to cholesterol synthesis pathway. The sequence is that of Sterol regulatory element-binding protein 2 from Mus musculus (Mouse).